Reading from the N-terminus, the 311-residue chain is MQDNQKVKKKEQYNLNKLQKRLRRNVGEAIADFNMIEEGDRIMVCLSGGKDSYTMLEILRNLQQSAPINFSLVAVNLDQKQPGFPEHILPAYLEQLGVEYKIVEENTYGIVKEKIPEGKTTCSLCSRLRRGILYRTATELGATKIALGHHRDDILQTLFLNMFYGGKMKGMPPKLMSDDGKHIVIRPLAYCREKDIVRFAEAKAFPIIPCNLCGSQPNLQRQVIADMLRDWDKRYPGRIETMFSAMQDIVPSHLCDTNLFDFKGIAHGSEVVDGGDLAFDREEIPLQPAGWQPEEDDTPLETLRLDVIEVK.

The short motif at 47–52 (SGGKDS) is the PP-loop motif element. Cysteine 122, cysteine 125, and cysteine 213 together coordinate [4Fe-4S] cluster.

The protein belongs to the TtcA family. Homodimer. It depends on Mg(2+) as a cofactor. Requires [4Fe-4S] cluster as cofactor.

It is found in the cytoplasm. It catalyses the reaction cytidine(32) in tRNA + S-sulfanyl-L-cysteinyl-[cysteine desulfurase] + AH2 + ATP = 2-thiocytidine(32) in tRNA + L-cysteinyl-[cysteine desulfurase] + A + AMP + diphosphate + H(+). Its pathway is tRNA modification. In terms of biological role, catalyzes the ATP-dependent 2-thiolation of cytidine in position 32 of tRNA, to form 2-thiocytidine (s(2)C32). The sulfur atoms are provided by the cysteine/cysteine desulfurase (IscS) system. This chain is tRNA-cytidine(32) 2-sulfurtransferase, found in Salmonella arizonae (strain ATCC BAA-731 / CDC346-86 / RSK2980).